The following is a 332-amino-acid chain: F-box/SPRY domain-containing protein 1 (332 aa).

Residues 1–10 (MTENNEETIV) show a composition bias toward acidic residues. The interval 1–81 (MTENNEETIV…RRSPRRPEVS (81 aa)) is disordered. The segment covering 15–24 (CNLTSSTPMK) has biased composition (polar residues). The F-box domain occupies 79-127 (EVSASRLPLKVLNQIFQYLSLKDLRSAMLTCHSWNNALSMEDSDIWQQL). The B30.2/SPRY domain maps to 138-330 (SDPFLFVELR…VTMVYVGSPQ (193 aa)).

It belongs to the FBXO45/Fsn family. As to quaternary structure, component of an SCF (SKP1-CUL1-F-box protein) E3 ubiquitin ligase complex composed of cul-1, fsn-1, rpm-1 and skr-1. Interacts (via SPRY domain) with scd-2 (via cytoplasmic domain). Interacts (via SPRY domain) with convertase egl-3 (via C-terminus).

It localises to the synapse. The protein operates within protein modification; protein ubiquitination. Functionally, component of a SCF (SKP1-CUL1-F-box protein) E3 ubiquitin ligase complex which is required for the restriction and/or maturation of synapses in GABAergic neuromuscular junction (NMJ) presynaptic neurons. Promotes NRJ synapse development and synaptic transmission by negatively regulating the daf-2/InsR pathway in muscles. By targeting convertase egl-3 for degradation, negatively modulates insulin-like protein ins-4 and ins-6 processing. May stabilize synapse formation by promoting the down-regulation of scd-2. Regulates axon termination in PLM and ALM neurons. The sequence is that of F-box/SPRY domain-containing protein 1 (fsn-1) from Caenorhabditis briggsae.